Reading from the N-terminus, the 543-residue chain is Chaperonin GroEL (543 aa).

Residues 30 to 33 (TLGP), lysine 51, 87 to 91 (DGTTT), glycine 415, 479 to 481 (NAA), and aspartate 495 contribute to the ATP site.

The protein belongs to the chaperonin (HSP60) family. In terms of assembly, forms a cylinder of 14 subunits composed of two heptameric rings stacked back-to-back. Interacts with the co-chaperonin GroES.

The protein localises to the cytoplasm. It catalyses the reaction ATP + H2O + a folded polypeptide = ADP + phosphate + an unfolded polypeptide.. Functionally, together with its co-chaperonin GroES, plays an essential role in assisting protein folding. The GroEL-GroES system forms a nano-cage that allows encapsulation of the non-native substrate proteins and provides a physical environment optimized to promote and accelerate protein folding. The polypeptide is Chaperonin GroEL (Francisella philomiragia subsp. philomiragia (strain ATCC 25017 / CCUG 19701 / FSC 153 / O#319-036)).